The sequence spans 461 residues: F-box protein At3g62230 (461 aa).

In terms of domain architecture, F-box spans 7-55 (VDIISTLSDFLLVLIISNLSFKEALSTSRLSTRWRHICRETRNISFRED).

As to quaternary structure, part of a SCF (ASK-cullin-F-box) protein ligase complex. Interacts with ASK4.

Its subcellular location is the nucleus. Its pathway is protein modification; protein ubiquitination. Functionally, component of SCF(ASK-cullin-F-box) E3 ubiquitin ligase complexes, which may mediate the ubiquitination and subsequent proteasomal degradation of target proteins. The polypeptide is F-box protein At3g62230 (Arabidopsis thaliana (Mouse-ear cress)).